The following is a 477-amino-acid chain: Endo-1,4-beta-xylanase A (477 aa).

A signal peptide spans Met-1 to Ala-41. Residues Ala-42–Ala-340 form the GH10 domain. Glu-169 serves as the catalytic Proton donor. Glu-277 serves as the catalytic Nucleophile. The Ricin B-type lectin domain maps to Ser-361 to Thr-477. 3 cysteine pairs are disulfide-bonded: Cys-364/Cys-383, Cys-406/Cys-423, and Cys-447/Cys-466.

This sequence belongs to the glycosyl hydrolase 10 (cellulase F) family.

It localises to the secreted. It carries out the reaction Endohydrolysis of (1-&gt;4)-beta-D-xylosidic linkages in xylans.. The protein operates within glycan degradation; xylan degradation. Functionally, contributes to hydrolyze hemicellulose, the major component of plant cell-walls. XLNA and XLNB seem to act sequentially on the substrate to yield xylobiose and xylose as carbon sources. This Streptomyces lividans protein is Endo-1,4-beta-xylanase A (xlnA).